Here is a 496-residue protein sequence, read N- to C-terminus: Probable cytosol aminopeptidase (496 aa).

Residues Lys251 and Asp256 each contribute to the Mn(2+) site. The active site involves Lys263. The Mn(2+) site is built by Asp274, Asp333, and Glu335. Residue Arg337 is part of the active site.

The protein belongs to the peptidase M17 family. The cofactor is Mn(2+).

The protein resides in the cytoplasm. The enzyme catalyses Release of an N-terminal amino acid, Xaa-|-Yaa-, in which Xaa is preferably Leu, but may be other amino acids including Pro although not Arg or Lys, and Yaa may be Pro. Amino acid amides and methyl esters are also readily hydrolyzed, but rates on arylamides are exceedingly low.. It carries out the reaction Release of an N-terminal amino acid, preferentially leucine, but not glutamic or aspartic acids.. Functionally, presumably involved in the processing and regular turnover of intracellular proteins. Catalyzes the removal of unsubstituted N-terminal amino acids from various peptides. This chain is Probable cytosol aminopeptidase, found in Acidovorax ebreus (strain TPSY) (Diaphorobacter sp. (strain TPSY)).